We begin with the raw amino-acid sequence, 89 residues long: Conotoxin Bu5 (89 aa).

An N-terminal signal peptide occupies residues 1-22; it reads MKLTCVLIVAVLFLTACQLATA. Positions 23 to 49 are excised as a propeptide; sequence ENSREEQGYSAVRSSDQIQDSDLKLTK. 3 disulfides stabilise this stretch: C51-C66, C58-C70, and C65-C79. C79 is modified (cysteine amide). Residues 80–89 constitute a propeptide that is removed on maturation; the sequence is GVSIDYYDSR.

The protein belongs to the conotoxin O1 superfamily. In terms of tissue distribution, expressed by the venom duct.

The protein resides in the secreted. The sequence is that of Conotoxin Bu5 from Conus bullatus (Bubble cone).